Here is a 37-residue protein sequence, read N- to C-terminus: Large ribosomal subunit protein bL36A (37 aa).

It belongs to the bacterial ribosomal protein bL36 family.

This chain is Large ribosomal subunit protein bL36A, found in Actinobacillus pleuropneumoniae serotype 3 (strain JL03).